Consider the following 279-residue polypeptide: Lactose operon transcription activator (279 aa).

Positions 174-272 (QHAVDFINTN…EISASEYRHH (99 aa)) constitute an HTH araC/xylS-type domain. DNA-binding regions (H-T-H motif) lie at residues 191-212 (EDVAKSVNITRSHLYKLFKKNL) and 239-262 (ISDISRQVGYKDPLLFSKNFTKHF).

Transcriptional regulator of the lacPH genes for lactose utilization. This Staphylococcus xylosus protein is Lactose operon transcription activator (lacR).